The following is a 131-amino-acid chain: Protein FON2 SPARE1 (131 aa).

A signal peptide spans 1 to 22 (MSRRLGAAAAVLLLWLAVLTFA). A disordered region spans residues 67–131 (SPSSLTTTDR…VPTGPNPLHH (65 aa)). Basic residues predominate over residues 76 to 97 (RHHHHHRHHGHHHHRGHDRWNR).

Belongs to the CLV3/ESR signal peptide family. As to expression, expressed in all aerial apical meristems, including the floral and inflorescence meristems in the reproductive phase and the shoot apical meristem in the vegetative phase. Also detected in the primordia of lateral organs such as the leaf and the floral organs.

The protein resides in the secreted. Functionally, involved in the maintenance of the floral meristem and of the shoot apical meristem in the vegetative phase. Suppresses the fon2 mutation and acts independently of FON1. In Oryza sativa subsp. japonica, the protein has a single amino acid substitution at the putative processing site of the signal peptide and is inactive. The protein is Protein FON2 SPARE1 (FOS1) of Oryza sativa subsp. indica (Rice).